We begin with the raw amino-acid sequence, 3259 residues long: MLSRLSGLANVVLHELSGDDDTDQNMRAPLDPELHQESDMEFNNTTQEDVQERLAYAEQLVVELKDIIRQKDVQLQQKDEALQEERKAADNKIKKLKLHAKAKLTSLNKYIEEMKAQGGTVLPTEPQSEEQLSKHDKSSTEEEMEIEKIKHKLQEKEELISTLQAQLTQAQAEQPAQSSTEMEEFVMMKQQLQEKEEFISTLQAQLSQTQAEQAAQQVVREKDARFETQVRLHEDELLQLVTQADVETEMQQKLRVLQRKLEEHEESLVGRAQVVDLLQQELTAAEQRNQILSQQLQQMEAEHNTLRNTVETEREESKILLEKMELEVAERKLSFHNLQEEMHHLLEQFEQAGQAQAELESRYSALEQKHKAEMEEKTSHILSLQKTGQELQSACDALKDQNSKLLQDKNEQAVQSAQTIQQLEDQLQQKSKEISQFLNRLPLQQHETASQTSFPDVYNEGTQAVTEENIASLQKRVVELENEKGALLLSSIELEELKAENEKLSSQITLLEAQNRTGEADREVSEISIVDIANKRSSSAEESGQDVLENTFSQKHKELSVLLLEMKEAQEEIAFLKLQLQGKRAEEADHEVLDQKEMKQMEGEGIAPIKMKVFLEDTGQDFPLMPNEESSLPAVEKEQASTEHQSRTSEEISLNDAGVELKSTKQDGDKSLSAVPDIGQCHQDELERLKSQILELELNFHKAQEIYEKNLDEKAKEISNLNQLIEEFKKNADNNSSAFTALSEERDQLLSQVKELSMVTELRAQVKQLEMNLAEAERQRRLDYESQTAHDNLLTEQIHSLSIEAKSKDVKIEVLQNELDDVQLQFSEQSTLIRSLQSQLQNKESEVLEGAERVRHISSKVEELSQALSQKELEITKMDQLLLEKKRDVETLQQTIEEKDQQVTEISFSMTEKMVQLNEEKFSLGVEIKTLKEQLNLLSRAEEAKKEQVEEDNEVSSGLKQNYDEMSPAGQISKEELQHEFDLLKKENEQRKRKLQAALINRKELLQRVSRLEEELANLKDESKKEIPLSETERGEVEEDKENKEYSEKCVTSKCQEIEIYLKQTISEKEVELQHIRKDLEEKLAAEEQFQALVKQMNQTLQDKTNQIDLLQAEISENQAIIQKLITSNTDASDGDSVALVKETVVISPPCTGSSEHWKPELEEKILALEKEKEQLQKKLQEALTSRKAILKKAQEKERHLREELKQQKDDYNRLQEQFDEQSKENENIGDQLRQLQIQVRESIDGKLPSTDQQESCSSTPGLEEPLFKATEQHHTQPVLESNLCPDWPSHSEDASALQGGTSVAQIKAQLKEIEAEKVELELKVSSTTSELTKKSEEVFQLQEQINKQGLEIESLKTVSHEAEVHAESLQQKLESSQLQIAGLEHLRELQPKLDELQKLISKKEEDVSYLSGQLSEKEAALTKIQTEIIEQEDLIKALHTQLEMQAKEHDERIKQLQVELCEMKQKPEEIGEESRAKQQIQRKLQAALISRKEALKENKSLQEELSLARGTIERLTKSLADVESQVSAQNKEKDTVLGRLALLQEERDKLITEMDRSLLENQSLSSSCESLKLALEGLTEDKEKLVKEIESLKSSKIAESTEWQEKHKELQKEYEILLQSYENVSNEAERIQHVVEAVRQEKQELYGKLRSTEANKKETEKQLQEAEQEMEEMKEKMRKFAKSKQQKILELEEENDRLRAEVHPAGDTAKECMETLLSSNASMKEELERVKMEYETLSKKFQSLMSEKDSLSEEVQDLKHQIEGNVSKQANLEATEKHDNQTNVTEEGTQSIPGETEEQDSLSMSTRPTCSESVPSAKSANPAVSKDFSSHDEINNYLQQIDQLKERIAGLEEEKQKNKEFSQTLENEKNTLLSQISTKDGELKMLQEEVTKMNLLNQQIQEELSRVTKLKETAEEEKDDLEERLMNQLAELNGSIGNYCQDVTDAQIKNELLESEMKNLKKCVSELEEEKQQLVKEKTKVESEIRKEYLEKIQGAQKEPGNKSHAKELQELLKEKQQEVKQLQKDCIRYQEKISALERTVKALEFVQTESQKDLEITKENLAQAVEHRKKAQAELASFKVLLDDTQSEAARVLADNLKLKKELQSNKESVKSQMKQKDEDLERRLEQAEEKHLKEKKNMQEKLDALRREKVHLEETIGEIQVTLNKKDKEVQQLQENLDSTVTQLAAFTKSMSSLQDDRDRVIDEAKKWERKFSDAIQSKEEEIRLKEDNCSVLKDQLRQMSIHMEELKINISRLEHDKQIWESKAQTEVQLQQKVCDTLQGENKELLSQLEETRHLYHSSQNELAKLESELKSLKDQLTDLSNSLEKCKEQKGNLEGIIRQQEADIQNSKFSYEQLETDLQASRELTSRLHEEINMKEQKIISLLSGKEEAIQVAIAELRQQHDKEIKELENLLSQEEEENIVLEEENKKAVDKTNQLMETLKTIKKENIQQKAQLDSFVKSMSSLQNDRDRIVGDYQQLEERHLSIILEKDQLIQEAAAENNKLKEEIRGLRSHMDDLNSENAKLDAELIQYREDLNQVITIKDSQQKQLLEVQLQQNKELENKYAKLEEKLKESEEANEDLRRSFNALQEEKQDLSKEIESLKVSISQLTRQVTALQEEGTLGLYHAQLKVKEEEVHRLSALFSSSQKRIAELEEELVCVQKEAAKKVGEIEDKLKKELKHLHHDAGIMRNETETAEERVAELARDLVEMEQKLLMVTKENKGLTAQIQSFGRSMSSLQNSRDHANEELDELKRKYDASLKELAQLKEQGLLNRERDALLSETAFSMNSTEENSLSHLEKLNQQLLSKDEQLLHLSSQLEDSYNQVQSFSKAMASLQNERDHLWNELEKFRKSEEGKQRSAAQPSTSPAEVQSLKKAMSSLQNDRDRLLKELKNLQQQYLQINQEITELHPLKAQLQEYQDKTKAFQIMQEELRQENLSWQHELHQLRMEKSSWEIHERRMKEQYLMAISDKDQQLSHLQNLIRELRSSSSQTQPLKVQYQRQASPETSASPDGSQNLVYETELLRTQLNDSLKEIHQKELRIQQLNSNFSQLLEEKNTLSIQLCDTSQSLRENQQHYGDLLNHCAVLEKQVQELQAGPLNIDVAPGAPQEKNGVHRKSDPEELREPQQSFSEAQQQLCNTRQEVNELRKLLEEERDQRVAAENALSVAEEQIRRLEHSEWDSSRTPIIGSCGTQEQALLIDLTSNSCRRTRSGVGWKRVLRSLCHSRTRVPLLAAIYFLMIHVLLILCFTGHL.

An N-acetylmethionine modification is found at M1. The Cytoplasmic segment spans residues 1–3235 (MLSRLSGLAN…LRSLCHSRTR (3235 aa)). A phosphoserine mark is found at S6, S17, S138, and S528. Positions 48-593 (EDVQERLAYA…RAEEADHEVL (546 aa)) form a coiled coil. The segment at 119 to 142 (GTVLPTEPQSEEQLSKHDKSSTEE) is disordered. The segment covering 131–142 (QLSKHDKSSTEE) has biased composition (basic and acidic residues). A disordered region spans residues 624–652 (LMPNEESSLPAVEKEQASTEHQSRTSEEI). Residues 635–650 (VEKEQASTEHQSRTSE) show a composition bias toward basic and acidic residues. S653 is modified (phosphoserine). Coiled-coil stretches lie at residues 677-1028 (DIGQ…KEIP), 1062-1245 (LKQT…ESID), and 1301-1779 (GTSV…TEKH). The disordered stretch occupies residues 944–963 (AKKEQVEEDNEVSSGLKQNY). Over residues 1747–1763 (SEKDSLSEEVQDLKHQI) the composition is skewed to basic and acidic residues. Residues 1747–1829 (SEKDSLSEEV…SANPAVSKDF (83 aa)) are disordered. Composition is skewed to polar residues over residues 1782–1794 (QTNVTEEGTQSIP) and 1802–1820 (SLSMSTRPTCSESVPSAKS). Positions 1828-3185 (DFSSHDEINN…EQIRRLEHSE (1358 aa)) form a coiled coil. S2216, S2735, S2872, and S2884 each carry phosphoserine. The segment at 2856–2876 (RKSEEGKQRSAAQPSTSPAEV) is disordered. The span at 2865–2875 (SAAQPSTSPAE) shows a compositional bias: polar residues. The tract at residues 2998 to 3021 (TQPLKVQYQRQASPETSASPDGSQ) is disordered. A Phosphoserine modification is found at S3037. Positions 3107-3140 (IDVAPGAPQEKNGVHRKSDPEELREPQQSFSEAQ) are disordered. Residues 3118–3131 (NGVHRKSDPEELRE) are compositionally biased toward basic and acidic residues. A helical transmembrane segment spans residues 3236-3256 (VPLLAAIYFLMIHVLLILCFT). The Lumenal segment spans residues 3257-3259 (GHL).

As to quaternary structure, homodimer; disulfide-linked. Interacts with PLK3.

The protein resides in the golgi apparatus membrane. In terms of biological role, may participate in forming intercisternal cross-bridges of the Golgi complex. The chain is Golgin subfamily B member 1 (GOLGB1) from Homo sapiens (Human).